The following is a 253-amino-acid chain: Indole-3-glycerol phosphate synthase (253 aa).

This sequence belongs to the TrpC family.

It catalyses the reaction 1-(2-carboxyphenylamino)-1-deoxy-D-ribulose 5-phosphate + H(+) = (1S,2R)-1-C-(indol-3-yl)glycerol 3-phosphate + CO2 + H2O. Its pathway is amino-acid biosynthesis; L-tryptophan biosynthesis; L-tryptophan from chorismate: step 4/5. This is Indole-3-glycerol phosphate synthase from Bacillus mycoides (strain KBAB4) (Bacillus weihenstephanensis).